Reading from the N-terminus, the 441-residue chain is UDP-N-acetylmuramoylalanine--D-glutamate ligase (441 aa).

Position 113–119 (113–119 (GSNAKST)) interacts with ATP.

Belongs to the MurCDEF family.

The protein localises to the cytoplasm. It carries out the reaction UDP-N-acetyl-alpha-D-muramoyl-L-alanine + D-glutamate + ATP = UDP-N-acetyl-alpha-D-muramoyl-L-alanyl-D-glutamate + ADP + phosphate + H(+). It functions in the pathway cell wall biogenesis; peptidoglycan biosynthesis. Functionally, cell wall formation. Catalyzes the addition of glutamate to the nucleotide precursor UDP-N-acetylmuramoyl-L-alanine (UMA). The sequence is that of UDP-N-acetylmuramoylalanine--D-glutamate ligase from Alcanivorax borkumensis (strain ATCC 700651 / DSM 11573 / NCIMB 13689 / SK2).